We begin with the raw amino-acid sequence, 188 residues long: Phosphatidylinositol N-acetylglucosaminyltransferase subunit H (188 aa).

The protein belongs to the PIGH family. Component of the glycosylphosphatidylinositol-N-acetylglucosaminyltransferase (GPI-GnT) complex composed at least by PIGA, PIGC, PIGH, PIGP, PIGQ, PIGY and DPM2. Interacts with PIGQ.

The protein localises to the cytoplasm. The protein operates within glycolipid biosynthesis; glycosylphosphatidylinositol-anchor biosynthesis. Its function is as follows. Part of the glycosylphosphatidylinositol-N-acetylglucosaminyltransferase (GPI-GnT) complex that catalyzes the transfer of N-acetylglucosamine from UDP-N-acetylglucosamine to phosphatidylinositol and participates in the first step of GPI biosynthesis. The polypeptide is Phosphatidylinositol N-acetylglucosaminyltransferase subunit H (Mus musculus (Mouse)).